Reading from the N-terminus, the 442-residue chain is Thymidine phosphorylase (442 aa).

The protein belongs to the thymidine/pyrimidine-nucleoside phosphorylase family. In terms of assembly, homodimer.

It carries out the reaction thymidine + phosphate = 2-deoxy-alpha-D-ribose 1-phosphate + thymine. It participates in pyrimidine metabolism; dTMP biosynthesis via salvage pathway; dTMP from thymine: step 1/2. Functionally, the enzymes which catalyze the reversible phosphorolysis of pyrimidine nucleosides are involved in the degradation of these compounds and in their utilization as carbon and energy sources, or in the rescue of pyrimidine bases for nucleotide synthesis. The chain is Thymidine phosphorylase from Vibrio vulnificus (strain CMCP6).